A 93-amino-acid polypeptide reads, in one-letter code: Small ribosomal subunit protein uS19 (93 aa).

2 disordered regions span residues 1–25 and 74–93; these read MPRSLKKGPFVDGHLQKKVDDQNTK and FAPTRTYRGHDKDDRKARRR. 2 stretches are compositionally biased toward basic and acidic residues: residues 14-23 and 81-93; these read HLQKKVDDQN and RGHDKDDRKARRR.

It belongs to the universal ribosomal protein uS19 family.

Functionally, protein S19 forms a complex with S13 that binds strongly to the 16S ribosomal RNA. This Beutenbergia cavernae (strain ATCC BAA-8 / DSM 12333 / CCUG 43141 / JCM 11478 / NBRC 16432 / NCIMB 13614 / HKI 0122) protein is Small ribosomal subunit protein uS19.